Here is a 447-residue protein sequence, read N- to C-terminus: Peptide chain release factor 1, mitochondrial (447 aa).

The N-terminal 63 residues, 1-63 (MNRRHLFAWL…LLNKNCSRRY (63 aa)), are a transit peptide targeting the mitochondrion. A GGQ domain region spans residues 299–363 (PKDLRIDTFR…LRARLYQQII (65 aa)). The GGQ signature appears at 313–315 (GGQ). Gln-315 is subject to N5-methylglutamine.

The protein belongs to the prokaryotic/mitochondrial release factor family. Post-translationally, methylation of glutamine in the GGQ triplet by HEMK1 is conserved from bacteria to mammals.

Its subcellular location is the mitochondrion. In terms of biological role, mitochondrial peptide chain release factor that directs the termination of translation in response to the peptide chain non-canonical stop codons AGG and AGA. Non-canonical termination codons AGG and AGA are found at the end of MT-CO1/COX1 and MT-ND6/ND6 open reading frames, respectively. Recognizes non-canonical stop codons via a network of interactions between the codon, MTRF1 and the ribosomal RNA (rRNA): in contrast to other translation release factors, which identify the codon in the A-site via direct interactions of amino acid side chains with the bases, MTRF1 repositions the first 2 bases of the stop codon to use an intricate network of interactions that includes residues of the release factor, the rRNA of the small ribosomal subunit, as well as neighboring bases of the mRNA. This chain is Peptide chain release factor 1, mitochondrial (MTRF1), found in Bos taurus (Bovine).